A 461-amino-acid chain; its full sequence is METLFNGTLTVGGRDQETTGFAWWSGNARLINLSGKLLGAHVAHAGLIVFWAGAMNLFEVSHFVPEKPMYEQGLILLPHIATLGYGVGPGGEIIDTFPYFVSGVLHLISSAVLGFGGVYHSLIGPETLEESYPFFGYVWKDKNKMTNILGYHLIMLGLGAWLLVWKAMYFGGVYDTWAPGGGDVRVITNPTTNAAVIFGYLVKSPFGGDGWICSVDNMEDIIGGHIWIGTLEILGGIWHIYTTPWPWARRAFVWSGEAYLSYSLGAIGVMGFIACCMSWFNNTAYPSEFYGPTGPEASQSQAFTFLVRDQRLGANVASAQGPTGLGKYLMRSPTGEIIFGGETMRFWDFRGPWLEPLRGPNGLDLNKLKNDIQPWQERRAAEYMTHAPLGSLNSVGGVATEINAVNFVSPRSWLACSHFCLGFFFFIGHLWHAGRARAAAAGFEKGIDRFDEPVLSMRPLD.

A propeptide spanning residues 1-2 is cleaved from the precursor; that stretch reads ME. Residue Thr-3 is modified to N-acetylthreonine. Thr-3 is modified (phosphothreonine). Transmembrane regions (helical) follow at residues 57–81, 122–143, 166–188, 243–263, and 279–300; these read LFEV…PHIA, LIGP…KDKN, KAMY…RVIT, TPWP…LSYS, and WFNN…ASQS. Glu-355 contributes to the [CaMn4O5] cluster binding site. Residues 435 to 459 form a helical membrane-spanning segment; it reads RARAAAAGFEKGIDRFDEPVLSMRP.

It belongs to the PsbB/PsbC family. PsbC subfamily. As to quaternary structure, PSII is composed of 1 copy each of membrane proteins PsbA, PsbB, PsbC, PsbD, PsbE, PsbF, PsbH, PsbI, PsbJ, PsbK, PsbL, PsbM, PsbT, PsbX, PsbY, PsbZ, Psb30/Ycf12, at least 3 peripheral proteins of the oxygen-evolving complex and a large number of cofactors. It forms dimeric complexes. The cofactor is Binds multiple chlorophylls and provides some of the ligands for the Ca-4Mn-5O cluster of the oxygen-evolving complex. It may also provide a ligand for a Cl- that is required for oxygen evolution. PSII binds additional chlorophylls, carotenoids and specific lipids.. Post-translationally, phosphorylated in vitro.

The protein localises to the plastid. Its subcellular location is the chloroplast thylakoid membrane. Functionally, one of the components of the core complex of photosystem II (PSII). It binds chlorophyll and helps catalyze the primary light-induced photochemical processes of PSII. PSII is a light-driven water:plastoquinone oxidoreductase, using light energy to abstract electrons from H(2)O, generating O(2) and a proton gradient subsequently used for ATP formation. The chain is Photosystem II CP43 reaction center protein from Chlamydomonas reinhardtii (Chlamydomonas smithii).